Reading from the N-terminus, the 561-residue chain is Putative periplasmic trehalase (561 aa).

An N-terminal signal peptide occupies residues 1–30 (MKSPAPSRPQKMALIPACIFLCFAALSVQA). Residues R148, 155–156 (WD), N192, 201–203 (RSQ), 273–275 (RPE), and G306 contribute to the substrate site. Active-site proton donor/acceptor residues include D308 and E492. E507 lines the substrate pocket. A disordered region spans residues 535 to 561 (CDNVPATRPLSESTTQPVKQKEAEPTP).

This sequence belongs to the glycosyl hydrolase 37 family. As to quaternary structure, monomer.

The protein localises to the periplasm. It carries out the reaction alpha,alpha-trehalose + H2O = alpha-D-glucose + beta-D-glucose. Provides the cells with the ability to utilize trehalose at high osmolarity by splitting it into glucose molecules that can subsequently be taken up by the phosphotransferase-mediated uptake system. The polypeptide is Putative periplasmic trehalase (Escherichia coli O157:H7).